A 127-amino-acid polypeptide reads, in one-letter code: Putative iron-sulfur cluster insertion protein ErpA (127 aa).

Positions methionine 1–proline 14 are enriched in polar residues. The disordered stretch occupies residues methionine 1–threonine 20. Iron-sulfur cluster contacts are provided by cysteine 55, cysteine 119, and cysteine 121.

Belongs to the HesB/IscA family. In terms of assembly, homodimer. Requires iron-sulfur cluster as cofactor.

In terms of biological role, required for insertion of 4Fe-4S clusters. The protein is Putative iron-sulfur cluster insertion protein ErpA of Nitrosospira multiformis (strain ATCC 25196 / NCIMB 11849 / C 71).